We begin with the raw amino-acid sequence, 796 residues long: Kinesin-like protein KIF3C (796 aa).

Residues 10–367 (ALKVVARCRP…LRFANRAKNI (358 aa)) form the Kinesin motor domain. Residue 97-104 (GQTGTGKT) participates in ATP binding. Disordered regions lie at residues 252 to 292 (RQNK…PKEA), 397 to 422 (EKKG…APAG), and 758 to 796 (KVRK…VDHD). Residues 256 to 269 (AGPNAAGGPATQPT) show a composition bias toward low complexity. Positions 378–632 (KDTLLREFQE…NEQTRELKLK (255 aa)) form a coiled coil. Residues 401–416 (MLGKRPRRKSSRRKKA) are compositionally biased toward basic residues. Residues 633–793 (YLIIENFIPP…SVPLHPATVV (161 aa)) form a globular region.

This sequence belongs to the TRAFAC class myosin-kinesin ATPase superfamily. Kinesin family. Kinesin II subfamily. As to quaternary structure, heterodimer of KIF3A and KIF3C.

It is found in the cytoplasm. The protein resides in the cytoskeleton. Its function is as follows. Microtubule-based anterograde translocator for membranous organelles. This Mus musculus (Mouse) protein is Kinesin-like protein KIF3C (Kif3c).